Reading from the N-terminus, the 283-residue chain is 5'-nucleotidase SurE (283 aa).

Positions 14, 15, 47, and 105 each coordinate a divalent metal cation.

The protein belongs to the SurE nucleotidase family. The cofactor is a divalent metal cation.

Its subcellular location is the cytoplasm. The catalysed reaction is a ribonucleoside 5'-phosphate + H2O = a ribonucleoside + phosphate. In terms of biological role, nucleotidase that shows phosphatase activity on nucleoside 5'-monophosphates. The polypeptide is 5'-nucleotidase SurE (Chlamydia muridarum (strain MoPn / Nigg)).